The following is a 305-amino-acid chain: Ribosomal RNA small subunit methyltransferase H (305 aa).

Residues 47–49 (GGH), Asp-66, Phe-93, Asp-108, and Gln-115 contribute to the S-adenosyl-L-methionine site. The interval 279 to 305 (ADSNEKLNNPRSRSAKLRLAKKRNPNE) is disordered. Residues 291 to 305 (RSAKLRLAKKRNPNE) are compositionally biased toward basic residues.

Belongs to the methyltransferase superfamily. RsmH family.

The protein localises to the cytoplasm. It carries out the reaction cytidine(1402) in 16S rRNA + S-adenosyl-L-methionine = N(4)-methylcytidine(1402) in 16S rRNA + S-adenosyl-L-homocysteine + H(+). Functionally, specifically methylates the N4 position of cytidine in position 1402 (C1402) of 16S rRNA. This chain is Ribosomal RNA small subunit methyltransferase H, found in Prochlorococcus marinus (strain SARG / CCMP1375 / SS120).